The chain runs to 104 residues: MGDYIVVLEAPIIVKDVESVEEAIEAAVNKVVNALEKEKLDFVRVELGYSKCPVCGAHFESAFVVGNVGLVGIYLTLKVFNAQSLEHAERIAKAVVGRALKKSH.

The protein belongs to the UPF0212 family.

In Pyrococcus horikoshii (strain ATCC 700860 / DSM 12428 / JCM 9974 / NBRC 100139 / OT-3), this protein is UPF0212 protein PH1312.